A 433-amino-acid polypeptide reads, in one-letter code: Succinate--CoA ligase [ADP-forming] subunit beta, mitochondrial (433 aa).

A mitochondrion-targeting transit peptide spans M1–L23. The region spanning H31–R273 is the ATP-grasp domain. Residues K68, G75–G77, and E136 each bind ATP. Residues N228 and D242 each coordinate Mg(2+). Residues N293 and G350–V352 each bind substrate.

This sequence belongs to the succinate/malate CoA ligase beta subunit family. Heterodimer of an alpha and a beta subunit. The cofactor is Mg(2+).

The protein localises to the mitochondrion. The enzyme catalyses succinate + ATP + CoA = succinyl-CoA + ADP + phosphate. It functions in the pathway carbohydrate metabolism; tricarboxylic acid cycle; succinate from succinyl-CoA (ligase route): step 1/1. Succinyl-CoA synthetase functions in the citric acid cycle (TCA), coupling the hydrolysis of succinyl-CoA to the synthesis of ATP and thus represents the only step of substrate-level phosphorylation in the TCA. The beta subunit provides nucleotide specificity of the enzyme and binds the substrate succinate, while the binding sites for coenzyme A and phosphate are found in the alpha subunit. The chain is Succinate--CoA ligase [ADP-forming] subunit beta, mitochondrial from Schizosaccharomyces pombe (strain 972 / ATCC 24843) (Fission yeast).